The following is a 301-amino-acid chain: MKIAVLSRNRHLYSTRRLVEEGINRGHEVKVIDCLHCSMNITSADPKIHYHEEVLEDFDVVIPRIGASVTFYGTAVLRQFEMMGVFPVNESVAITRSRDKLRSLQLLARKGVGMPVTGFANKPDNVPELLKMVGGAPVVIKLLQGTQGIGVVLAETRKAAESVIEAFMGLKADILVQEFIKEAGGADIRCFVIGDKVIAAMKRQGAEGEFRSNLHRGGTASLVRITPEERRTAITAAKAMGLNVAGVDLLRSSRGPLVMEVNSSPGLEGIENATGKNVAGMIINWTEKNYKPWKTKTRGRG.

One can recognise an ATP-grasp domain in the interval 104–287 (LQLLARKGVG…VAGMIINWTE (184 aa)). Residues Lys-141, 178 to 179 (EF), Asp-187, and 211 to 213 (RSN) each bind ATP. Mg(2+) is bound by residues Asp-248, Glu-260, and Asn-262. Residues Asp-248, Glu-260, and Asn-262 each contribute to the Mn(2+) site.

It belongs to the RimK family. Mg(2+) is required as a cofactor. Mn(2+) serves as cofactor.

The protein is Probable alpha-L-glutamate ligase of Marinobacter nauticus (strain ATCC 700491 / DSM 11845 / VT8) (Marinobacter aquaeolei).